A 670-amino-acid polypeptide reads, in one-letter code: Lebercilin-like protein (670 aa).

The interval 24–44 is disordered; that stretch reads RRSAECKRSPGTGDFSRNSNA. Coiled coils occupy residues 148–259 and 305–336; these read LHKI…EREE and AAQT…IKNI. Residues 351–402 form a disordered region; the sequence is YPKVSSTKSVQADRKSLPFTSMRHQGTQKSDVAPLTTKGKKATGNMDRKEKS. Residues 368–380 are compositionally biased toward polar residues; sequence PFTSMRHQGTQKS. Residues 420 to 440 are a coiled coil; sequence EDSKTKYEDLSREEKHLEVQV. Disordered stretches follow at residues 495–520, 533–594, and 606–647; these read RSMQ…PLRQ, LHHG…FRDK, and GYVL…AFGD. Positions 546-558 are enriched in polar residues; it reads AGNTKYSHSTSKH. 3 stretches are compositionally biased toward basic and acidic residues: residues 560 to 572, 585 to 594, and 621 to 632; these read SNRE…HSDS, KAKDTTFRDK, and GSEEPLQSKESH. A compositionally biased stretch (polar residues) spans 637 to 647; sequence SQASASNAFGD.

Belongs to the LCA5 family.

The protein is Lebercilin-like protein of Papio anubis (Olive baboon).